Here is a 175-residue protein sequence, read N- to C-terminus: MDIAIHHPWIRRPFFPFHSPSRLFDQFFGEHLLESDLFSTSTSLSPFYLRPPSFFRAPSWIDTGLSEMRMEKDRLSVNLDVKHFSPEELKVKVLGDVIEVHGKHEERQDEHGFISREFHRKYRIPADVDPLTITSSLSSDGVLTVNGPRKQASGPERTIPITREEKPAVTAAPKK.

Met-1 carries the post-translational modification N-acetylmethionine. Phosphoserine is present on Ser-19. Ser-41 carries an O-linked (GlcNAc) serine glycan. Phosphoserine occurs at positions 45 and 59. The sHSP domain maps to Arg-56 to Glu-164. His-83 is a binding site for Zn(2+). Lys-92 is modified (N6-acetyllysine). Zn(2+) is bound by residues His-104, Glu-106, His-111, and His-119. Positions Val-142–Lys-175 are disordered. The residue at position 166 (Lys-166) is an N6-acetyllysine. O-linked (GlcNAc) threonine glycosylation is present at Thr-170.

Belongs to the small heat shock protein (HSP20) family. Heteromer composed of three CRYAA and one CRYAB subunits. Aggregates with homologous proteins, including the small heat shock protein HSPB1, to form large heteromeric complexes. Inter-subunit bridging via zinc ions enhances stability, which is crucial as there is no protein turn over in the lens. Interacts with HSPBAP1 and TTN/titin. Interacts with TMEM109; in the cellular response to DNA damage. Interacts with DES; binds rapidly during early stages of DES filament assembly and a reduced binding seen in the later stages. Interacts with ATP6V1A and with MTOR, forming a ternary complex. Lens as well as other tissues.

Its subcellular location is the cytoplasm. The protein localises to the nucleus. It is found in the secreted. It localises to the lysosome. Functionally, may contribute to the transparency and refractive index of the lens. Has chaperone-like activity, preventing aggregation of various proteins under a wide range of stress conditions. In lens epithelial cells, stabilizes the ATP6V1A protein, preventing its degradation by the proteasome. This Spalax judaei (Judean Mountains blind mole rat) protein is Alpha-crystallin B chain (CRYAB).